A 185-amino-acid chain; its full sequence is Ribosome-recycling factor (185 aa).

It belongs to the RRF family.

Its subcellular location is the cytoplasm. In terms of biological role, responsible for the release of ribosomes from messenger RNA at the termination of protein biosynthesis. May increase the efficiency of translation by recycling ribosomes from one round of translation to another. This is Ribosome-recycling factor from Chromobacterium violaceum (strain ATCC 12472 / DSM 30191 / JCM 1249 / CCUG 213 / NBRC 12614 / NCIMB 9131 / NCTC 9757 / MK).